Here is an 801-residue protein sequence, read N- to C-terminus: Ferredoxin:CoB-CoM heterodisulfide reductase subunit A (801 aa).

An FAD-binding site is contributed by 149 to 172; it reads GGGIAGITAALNLADNGVSTVLVE. 2 consecutive 4Fe-4S ferredoxin-type domains span residues 239–269 and 285–320; these read KKPR…FNCG and PKIY…FSQK. Positions 248, 251, 254, 258, 295, 303, 306, and 310 each coordinate [4Fe-4S] cluster. Positions 382–409 are disordered; sequence FSKASSDPTPATCDSRCEDSSDESQGTD. 4Fe-4S ferredoxin-type domains follow at residues 606-634 and 635-664; these read EIAT…VNES and GRVV…IAGF. Positions 615, 618, 621, 624, 644, 647, 650, and 654 each coordinate [4Fe-4S] cluster.

This sequence belongs to the HdrA family. In terms of assembly, the ferredoxin:CoB-CoM heterodisulfide reductase is composed of three subunits; HdrA1, HdrB1 and HdrC1. [4Fe-4S] cluster is required as a cofactor. It depends on FAD as a cofactor.

It localises to the cytoplasm. It carries out the reaction coenzyme B + coenzyme M + 2 oxidized [2Fe-2S]-[ferredoxin] = coenzyme M-coenzyme B heterodisulfide + 2 reduced [2Fe-2S]-[ferredoxin] + 2 H(+). Its pathway is cofactor metabolism; coenzyme M-coenzyme B heterodisulfide reduction; coenzyme B and coenzyme M from coenzyme M-coenzyme B heterodisulfide: step 1/1. In terms of biological role, part of a complex that catalyzes the reversible reduction of CoM-S-S-CoB to the thiol-coenzymes H-S-CoM (coenzyme M) and H-S-CoB (coenzyme B). Probably involved in methylotrophic methanogenesis but not in aceticlastic methanogenesis. The chain is Ferredoxin:CoB-CoM heterodisulfide reductase subunit A from Methanosarcina acetivorans (strain ATCC 35395 / DSM 2834 / JCM 12185 / C2A).